The following is a 404-amino-acid chain: Cysteine desulfurase IscS (404 aa).

Pyridoxal 5'-phosphate contacts are provided by residues 75–76, Asn155, Gln183, and 203–205; these read AT and SAH. N6-(pyridoxal phosphate)lysine is present on Lys206. A pyridoxal 5'-phosphate-binding site is contributed by Thr243. The Cysteine persulfide intermediate role is filled by Cys328. A [2Fe-2S] cluster-binding site is contributed by Cys328.

It belongs to the class-V pyridoxal-phosphate-dependent aminotransferase family. NifS/IscS subfamily. In terms of assembly, homodimer. Forms a heterotetramer with IscU, interacts with other sulfur acceptors. Requires pyridoxal 5'-phosphate as cofactor.

Its subcellular location is the cytoplasm. The enzyme catalyses (sulfur carrier)-H + L-cysteine = (sulfur carrier)-SH + L-alanine. It participates in cofactor biosynthesis; iron-sulfur cluster biosynthesis. Master enzyme that delivers sulfur to a number of partners involved in Fe-S cluster assembly, tRNA modification or cofactor biosynthesis. Catalyzes the removal of elemental sulfur atoms from cysteine to produce alanine. Functions as a sulfur delivery protein for Fe-S cluster synthesis onto IscU, an Fe-S scaffold assembly protein, as well as other S acceptor proteins. In Tolumonas auensis (strain DSM 9187 / NBRC 110442 / TA 4), this protein is Cysteine desulfurase IscS.